We begin with the raw amino-acid sequence, 723 residues long: Tripartite motif-containing protein 42 (723 aa).

The RING-type zinc-finger motif lies at 146–192; the sequence is CPMCNRLRLHSFMLPCNHSLCEKCLRQLQKHAEVTENFFILICPMCS. 2 consecutive B box-type zinc fingers follow at residues 235–280 and 285–326; these read PILC…FVDT and QDEK…TVSL. Zn(2+)-binding residues include Cys-290, His-293, Cys-313, and His-318. Residues 382 to 412 are a coiled coil; sequence KLRAILQEKEKIIMEQIENLEVSRQKEIEKY. The COS domain maps to 434–492; that stretch reads LKETGQVAFLQSAKILVDQIEEGIQNTFRPDPQLRLHSLHCIPLDFAELSNAIHELFPT. The region spanning 603–701 is the Fibronectin type-III domain; the sequence is TPGPIVIYQT…DICKVVTPDG (99 aa).

It belongs to the TRIM/RBCC family.

The protein is Tripartite motif-containing protein 42 (Trim42) of Mus musculus (Mouse).